Consider the following 390-residue polypeptide: Queuine tRNA-ribosyltransferase (390 aa).

Residue Asp92 is the Proton acceptor of the active site. Residues 92–96, Asp146, Gln195, and Gly222 each bind substrate; that span reads DSGGF. The RNA binding stretch occupies residues 253 to 259; the sequence is GVGTPED. Asp272 acts as the Nucleophile in catalysis. The RNA binding; important for wobble base 34 recognition stretch occupies residues 277–281; it reads TRNAR. Zn(2+) is bound by residues Cys310, Cys312, Cys315, and His354.

It belongs to the queuine tRNA-ribosyltransferase family. As to quaternary structure, homodimer. Within each dimer, one monomer is responsible for RNA recognition and catalysis, while the other monomer binds to the replacement base PreQ1. Zn(2+) serves as cofactor.

It carries out the reaction 7-aminomethyl-7-carbaguanine + guanosine(34) in tRNA = 7-aminomethyl-7-carbaguanosine(34) in tRNA + guanine. It functions in the pathway tRNA modification; tRNA-queuosine biosynthesis. In terms of biological role, catalyzes the base-exchange of a guanine (G) residue with the queuine precursor 7-aminomethyl-7-deazaguanine (PreQ1) at position 34 (anticodon wobble position) in tRNAs with GU(N) anticodons (tRNA-Asp, -Asn, -His and -Tyr). Catalysis occurs through a double-displacement mechanism. The nucleophile active site attacks the C1' of nucleotide 34 to detach the guanine base from the RNA, forming a covalent enzyme-RNA intermediate. The proton acceptor active site deprotonates the incoming PreQ1, allowing a nucleophilic attack on the C1' of the ribose to form the product. After dissociation, two additional enzymatic reactions on the tRNA convert PreQ1 to queuine (Q), resulting in the hypermodified nucleoside queuosine (7-(((4,5-cis-dihydroxy-2-cyclopenten-1-yl)amino)methyl)-7-deazaguanosine). This is Queuine tRNA-ribosyltransferase from Verminephrobacter eiseniae (strain EF01-2).